The chain runs to 1363 residues: MRVVDKMAGLMWAALTLVIGLGLLVPSNGEEYICDSMDIRNRVSNLRQLENCTVIEGYLQILLIDFAEEQDYSGLAFPNLVEITDYFLLYRVRGLTNLSELFPNLAVIRGTNLFFNYALVVFEMLDMQKIGLYSLQNITRGSVRIEKNPNLCYLDTIDWSFIAESGYSNNFIVDNREEEECVNFCPGRCRIKHPVLQDLCWAEEHCQKVCPESCLGNCRDGISGCCHENCIGGCDGPTERDCVACKYFVHNGECLIQCPPDTYQYKDRRCITEEECPNTTNSVWKLHHRKCIPECPSGYTTDINNPRLCTECEGQCPKSCKGGLVDSLAAAQRFRGCTIIEGELKISIRGGDNIIDELEENLGLIEEVGHYVAIVRSYALVTLDFLRSLKRIRGIQKENGYAFYVLDNRNLEKLFDWDRTDITIDEGKLFFHFNPKLCRHVILTMVDKVGLPEHAITDTDISTLTNGDQAQCSFSRLEIEEINTSKDMIILRWSEFRPPDPRDLLSYTVSYRETEDQGIDEYDGQDACGNTEWKEFDVSPTQTAHIITGLKPWTQYALLVKTYTKAGAREGSGAKSDIVYARTDADKPTHPQDVVVYSNSSNTLIITWKPPNRPNGNVTHYIVKYKRQQEDVAEMEQREYCKGGLKPHRPTQGLEDIVNNEEEPNNSTIGDGTCCECPKSEDEIRIEEEEAAFQQEFENFLHNNVYHKRENETRAGRRRRELPVTARPFYSNQTVNVTLPSTNRTVPPTPTPNPNPQLETTVWNEHMVVLTGLRHFSEYIIEVIACNADAAVGCSGSAVELARTQADDSADNIPGNITVVEIKEDMAKLYWPKPDSPNSMVVHYNIEYKKLGSDFNYEQQEPKCVENFKFLQSQGYTISNLVAGNYSVRFRATSFAGNGSWSNYVTFYVEEEDTSPDPQDPQQQVPVSLMIGMGVGFSLLLILAVIFGIWYCTKKRFGDKQMPNGVLYASVNPEYMSSDDVYVPDEWEVPREKITLIRELGQGSFGMVYEGEAKDVVKDEPMVSVAVKTVNESASIRERIEFLNEASVMKTFNCHHVVKLMGVVSKGQPTLVVMELMALGDLKNYLRRHRPEEDVGLSDSPASNEAKNSPFAENDNDLPPTFKDIIQMAGVIADGMSYLAAKKFVHRDLACRNCMVAQDRTVKIGDFGMTRDIYETDYYRKGGKGLLPVRWMSPESLKVGVFTSQSDVWSYGVVLWEMATLASQPYQGKSNEEVLKFVIDGGMLEKPEGCPNKLYDLMKLCWQYRQSMRPTFLEIVEILSPELQAHFNEVSFYHSLDNHGREPLEMDDVALDSGADTETEMYPSGSEFSSTPSPPSETPYSHMNGSHPQNGSMNLRIPKSTLC.

An N-terminal signal peptide occupies residues Met-1–Gly-29. Residues Asn-51, Asn-97, Asn-137, Asn-278, Asn-483, Asn-599, Asn-617, Asn-665, Asn-666, Asn-711, Asn-732, Asn-736, Asn-743, Asn-816, Asn-885, and Asn-898 are each glycosylated (N-linked (GlcNAc...) asparagine). Fibronectin type-III domains lie at Ser-473–Asp-586 and His-590–Ser-680. Fibronectin type-III domains lie at Glu-712–Thr-804 and Ile-813–Glu-912. The Extracellular portion of the chain corresponds to Glu-721–Ser-928. Residues Leu-739 to Glu-759 form a disordered region. Residues Leu-929 to Ile-949 traverse the membrane as a helical segment. At Trp-950–Cys-1363 the chain is on the cytoplasmic side. One can recognise a Protein kinase domain in the interval Ile-994 to Leu-1283. ATP contacts are provided by residues Leu-1000–Val-1008 and Lys-1028. The tract at residues Pro-1091–Asp-1117 is disordered. The active-site Proton acceptor is Asp-1148. At Tyr-1174 the chain carries Phosphotyrosine; by autocatalysis. The tract at residues Asp-1316 to Cys-1363 is disordered. Over residues Tyr-1322–Thr-1331 the composition is skewed to low complexity. The span at Met-1343 to Met-1353 shows a compositional bias: polar residues.

The protein belongs to the protein kinase superfamily. Tyr protein kinase family. Insulin receptor subfamily. In terms of assembly, probable tetramer of 2 alpha and 2 beta chains linked by disulfide bonds. The alpha chains contribute to the formation of the ligand-binding domain, while the beta chains carry the kinase domain. Requires Mn(2+) as cofactor.

The protein resides in the membrane. The catalysed reaction is L-tyrosyl-[protein] + ATP = O-phospho-L-tyrosyl-[protein] + ADP + H(+). Functionally, this receptor binds to the insulin related peptide and has a tyrosine-protein kinase activity. This is Insulin-like peptide receptor from Branchiostoma lanceolatum (Common lancelet).